We begin with the raw amino-acid sequence, 364 residues long: Coproporphyrin III ferrochelatase (364 aa).

Fe-coproporphyrin III is bound by residues R29 and Y118. The Fe(2+) site is built by H169 and E250.

Belongs to the ferrochelatase family.

The protein resides in the cytoplasm. It carries out the reaction Fe-coproporphyrin III + 2 H(+) = coproporphyrin III + Fe(2+). Its pathway is porphyrin-containing compound metabolism; protoheme biosynthesis. Functionally, involved in coproporphyrin-dependent heme b biosynthesis. Catalyzes the insertion of ferrous iron into coproporphyrin III to form Fe-coproporphyrin III. In Streptococcus pneumoniae (strain Taiwan19F-14), this protein is Coproporphyrin III ferrochelatase.